Consider the following 173-residue polypeptide: Crossover junction endodeoxyribonuclease RuvC (173 aa).

Catalysis depends on residues Asp-11, Glu-71, and Asp-143. Asp-11, Glu-71, and Asp-143 together coordinate Mg(2+).

It belongs to the RuvC family. Homodimer which binds Holliday junction (HJ) DNA. The HJ becomes 2-fold symmetrical on binding to RuvC with unstacked arms; it has a different conformation from HJ DNA in complex with RuvA. In the full resolvosome a probable DNA-RuvA(4)-RuvB(12)-RuvC(2) complex forms which resolves the HJ. Mg(2+) serves as cofactor.

The protein localises to the cytoplasm. The catalysed reaction is Endonucleolytic cleavage at a junction such as a reciprocal single-stranded crossover between two homologous DNA duplexes (Holliday junction).. Its function is as follows. The RuvA-RuvB-RuvC complex processes Holliday junction (HJ) DNA during genetic recombination and DNA repair. Endonuclease that resolves HJ intermediates. Cleaves cruciform DNA by making single-stranded nicks across the HJ at symmetrical positions within the homologous arms, yielding a 5'-phosphate and a 3'-hydroxyl group; requires a central core of homology in the junction. The consensus cleavage sequence is 5'-(A/T)TT(C/G)-3'. Cleavage occurs on the 3'-side of the TT dinucleotide at the point of strand exchange. HJ branch migration catalyzed by RuvA-RuvB allows RuvC to scan DNA until it finds its consensus sequence, where it cleaves and resolves the cruciform DNA. This is Crossover junction endodeoxyribonuclease RuvC from Brucella suis biovar 1 (strain 1330).